Consider the following 262-residue polypeptide: Small ribosomal subunit protein eS1 (262 aa).

The protein belongs to the eukaryotic ribosomal protein eS1 family. In terms of assembly, component of the small ribosomal subunit. Mature ribosomes consist of a small (40S) and a large (60S) subunit. The 40S subunit contains about 33 different proteins and 1 molecule of RNA (18S). The 60S subunit contains about 49 different proteins and 3 molecules of RNA (25S, 5.8S and 5S).

The protein resides in the cytoplasm. This Plasmodium vivax (strain Salvador I) protein is Small ribosomal subunit protein eS1.